Consider the following 2896-residue polypeptide: Hemocyanin G-type, units Oda to Odg (2896 aa).

Positions 1–419 (NLIRKDVDAL…ADMVVVDKTG (419 aa)) are functional unit Oda. Histidine 41 contributes to the Cu cation binding site. A disulfide bridge connects residues cysteine 47 and cysteine 57. The segment at residues 58-60 (CLH) is a cross-link (2'-(S-cysteinyl)-histidine (Cys-His)). Histidine 60, histidine 69, histidine 178, histidine 182, and histidine 209 together coordinate Cu cation. Intrachain disulfides connect cysteine 168/cysteine 234 and cysteine 321/cysteine 333. N-linked (GlcNAc...) asparagine glycosylation is present at asparagine 386. Residues 420-834 (LNVRKDLQSL…KESGVVFDEL (415 aa)) form a functional unit Odb region. A Cu cation-binding site is contributed by histidine 460. Cysteine 466 and cysteine 477 are joined by a disulfide. Residues 478–480 (CVH) constitute a cross-link (2'-(S-cysteinyl)-histidine (Cys-His)). Histidine 480, histidine 489, histidine 601, histidine 605, and histidine 632 together coordinate Cu cation. The cysteines at positions 591 and 657 are disulfide-linked. The N-linked (GlcNAc...) asparagine glycan is linked to asparagine 804. The segment at 835–1254 (YRSRRDVSSL…GIWVEPVTSA (420 aa)) is functional unit Odc. Position 875 (histidine 875) interacts with Cu cation. An intrachain disulfide couples cysteine 881 to cysteine 892. A cross-link (2'-(S-cysteinyl)-histidine (Cys-His)) is located at residues 893–895 (CHH). Cu cation contacts are provided by histidine 895, histidine 904, histidine 1013, histidine 1017, histidine 1044, and histidine 1292. A disulfide bridge connects residues cysteine 1003 and cysteine 1070. A functional unit Odd region spans residues 1255-1667 (NRIRKNLNAL…ADIKSEEGNE (413 aa)). A disulfide bridge connects residues cysteine 1298 and cysteine 1309. Residues 1310-1312 (CIH) constitute a cross-link (2'-(S-cysteinyl)-histidine (Cys-His)). Cu cation contacts are provided by histidine 1312, histidine 1321, histidine 1425, histidine 1429, and histidine 1456. The cysteines at positions 1415 and 1482 are disulfide-linked. N-linked (GlcNAc...) asparagine glycosylation occurs at asparagine 1496. Cysteine 1571 and cysteine 1581 are joined by a disulfide. Residue asparagine 1634 is glycosylated (N-linked (GlcNAc...) asparagine). The functional unit Ode stretch occupies residues 1668 to 2085 (YLVRKNVERL…NEDADIDTPL (418 aa)). Position 1708 (histidine 1708) interacts with Cu cation. A disulfide bridge connects residues cysteine 1714 and cysteine 1725. The 2'-(S-cysteinyl)-histidine (Cys-His) cross-link spans 1726 to 1728 (CLH). The Cu cation site is built by histidine 1728, histidine 1737, histidine 1849, histidine 1853, and histidine 1880. 2 disulfide bridges follow: cysteine 1839-cysteine 1906 and cysteine 1997-cysteine 2003. Residue asparagine 2055 is glycosylated (N-linked (GlcNAc...) asparagine). The functional unit Odf stretch occupies residues 2086-2502 (NHIRRNVESL…REVHKKTVGD (417 aa)). Histidine 2126 contributes to the Cu cation binding site. Cysteine 2131 and cysteine 2141 are joined by a disulfide. Positions 2142-2144 (CLH) form a cross-link, 2'-(S-cysteinyl)-histidine (Cys-His). Cu cation-binding residues include histidine 2144 and histidine 2153. An N-linked (GlcNAc...) asparagine glycan is attached at asparagine 2201. 2 disulfides stabilise this stretch: cysteine 2252-cysteine 2319 and cysteine 2406-cysteine 2411. Residues histidine 2262, histidine 2266, and histidine 2293 each coordinate Cu cation. Residues 2503–2896 (AIIRKNVNSL…VFLAPAKTTH (394 aa)) form a functional unit Odg region. A Cu cation-binding site is contributed by histidine 2543. A disulfide bond links cysteine 2549 and cysteine 2559. Asparagine 2553 carries N-linked (GlcNAc...) asparagine glycosylation. A cross-link (2'-(S-cysteinyl)-histidine (Cys-His)) is located at residues 2560-2562 (CQH). Positions 2562, 2571, 2671, 2675, and 2702 each coordinate Cu cation. Cystine bridges form between cysteine 2661–cysteine 2728 and cysteine 2815–cysteine 2821.

It belongs to the tyrosinase family. Hemocyanin subfamily. Decamers of large identical subunits (350 kDa), each containing 7 globular oxygen-binding functional units: ODA, ODB, ODC, ODD, ODE, ODF, and ODG. Decamer formation requires the presence of magnesium ions. It depends on Cu(2+) as a cofactor.

Hemocyanins are copper-containing oxygen carriers occurring freely dissolved in the hemolymph of many mollusks and arthropods. This is Hemocyanin G-type, units Oda to Odg (ODHCY) from Enteroctopus dofleini (North Pacific giant octopus).